The chain runs to 408 residues: Acetate kinase (408 aa).

Asn-10 lines the Mg(2+) pocket. Lys-17 serves as a coordination point for ATP. Arg-96 is a binding site for substrate. Asp-153 serves as the catalytic Proton donor/acceptor. Residues 213 to 217 (HLGNG) and 288 to 290 (DLR) each bind ATP. Mg(2+) is bound at residue Glu-393.

Belongs to the acetokinase family. Homodimer. Mg(2+) is required as a cofactor. The cofactor is Mn(2+).

The protein resides in the cytoplasm. The catalysed reaction is acetate + ATP = acetyl phosphate + ADP. The protein operates within metabolic intermediate biosynthesis; acetyl-CoA biosynthesis; acetyl-CoA from acetate: step 1/2. Catalyzes the formation of acetyl phosphate from acetate and ATP. Can also catalyze the reverse reaction. This is Acetate kinase from Borrelia duttonii (strain Ly).